We begin with the raw amino-acid sequence, 149 residues long: Ribosome maturation factor RimP (149 aa).

Belongs to the RimP family.

It is found in the cytoplasm. Its function is as follows. Required for maturation of 30S ribosomal subunits. This chain is Ribosome maturation factor RimP, found in Neisseria gonorrhoeae (strain NCCP11945).